A 262-amino-acid chain; its full sequence is Indole-3-glycerol phosphate synthase (262 aa).

This sequence belongs to the TrpC family.

The enzyme catalyses 1-(2-carboxyphenylamino)-1-deoxy-D-ribulose 5-phosphate + H(+) = (1S,2R)-1-C-(indol-3-yl)glycerol 3-phosphate + CO2 + H2O. Its pathway is amino-acid biosynthesis; L-tryptophan biosynthesis; L-tryptophan from chorismate: step 4/5. The chain is Indole-3-glycerol phosphate synthase from Leptothrix cholodnii (strain ATCC 51168 / LMG 8142 / SP-6) (Leptothrix discophora (strain SP-6)).